The chain runs to 310 residues: MKTLTRKLSRTAITLVLVILAFIAIFRAWVYYTESPWTRDARFSADVVAIAPDVAGLITHVNVHDNQLVKKDQVLFTIDQPRYQKALAEAEADVAYYQVLAQEKRQEAGRRNRLGVQAMSREEIDQANNVLQTVLHQLAKAQATRDLAKLDPERTVIRAPADGWVTNLNVYAGEFITRGSTAVALVKKNSFYVQAYMEETKLEGVRPGYRAEITPLGSNRVLKGTVDSVAAGVTNASSTSDAKGMATIDSNLEWVRLAQRVPVRIRLDEQQGNLWPAGTTATVVITGKQDRDASQDSFFRKLAHRLREFG.

The helical transmembrane segment at Ala12–Tyr32 threads the bilayer.

This sequence belongs to the membrane fusion protein (MFP) (TC 8.A.1) family.

It localises to the cell inner membrane. Its function is as follows. Forms an efflux pump with AaeB. The polypeptide is p-hydroxybenzoic acid efflux pump subunit AaeA (Salmonella gallinarum (strain 287/91 / NCTC 13346)).